A 360-amino-acid chain; its full sequence is Phospho-N-acetylmuramoyl-pentapeptide-transferase (360 aa).

10 helical membrane-spanning segments follow: residues 21 to 41 (YITF…LWIG), 73 to 93 (TMGG…WADL), 98 to 118 (VWFV…DDYW), 132 to 152 (WKYF…YAVG), 168 to 188 (FMPQ…VGTS), 199 to 219 (GLAI…AWAT), 236 to 256 (AGEL…FLWY), 263 to 283 (VFMG…IAVL), 288 to 308 (LLLV…ILQV), and 338 to 358 (VIVC…VTLK).

Belongs to the glycosyltransferase 4 family. MraY subfamily. It depends on Mg(2+) as a cofactor.

Its subcellular location is the cell inner membrane. The enzyme catalyses UDP-N-acetyl-alpha-D-muramoyl-L-alanyl-gamma-D-glutamyl-meso-2,6-diaminopimeloyl-D-alanyl-D-alanine + di-trans,octa-cis-undecaprenyl phosphate = di-trans,octa-cis-undecaprenyl diphospho-N-acetyl-alpha-D-muramoyl-L-alanyl-D-glutamyl-meso-2,6-diaminopimeloyl-D-alanyl-D-alanine + UMP. Its pathway is cell wall biogenesis; peptidoglycan biosynthesis. Functionally, catalyzes the initial step of the lipid cycle reactions in the biosynthesis of the cell wall peptidoglycan: transfers peptidoglycan precursor phospho-MurNAc-pentapeptide from UDP-MurNAc-pentapeptide onto the lipid carrier undecaprenyl phosphate, yielding undecaprenyl-pyrophosphoryl-MurNAc-pentapeptide, known as lipid I. The sequence is that of Phospho-N-acetylmuramoyl-pentapeptide-transferase from Actinobacillus pleuropneumoniae serotype 7 (strain AP76).